The following is an 87-amino-acid chain: Small ribosomal subunit protein uS15 (87 aa).

Belongs to the universal ribosomal protein uS15 family. In terms of assembly, part of the 30S ribosomal subunit. Forms a bridge to the 50S subunit in the 70S ribosome, contacting the 23S rRNA.

One of the primary rRNA binding proteins, it binds directly to 16S rRNA where it helps nucleate assembly of the platform of the 30S subunit by binding and bridging several RNA helices of the 16S rRNA. In terms of biological role, forms an intersubunit bridge (bridge B4) with the 23S rRNA of the 50S subunit in the ribosome. The chain is Small ribosomal subunit protein uS15 from Pseudothermotoga lettingae (strain ATCC BAA-301 / DSM 14385 / NBRC 107922 / TMO) (Thermotoga lettingae).